We begin with the raw amino-acid sequence, 145 residues long: MTLTDYVREVSLADFGKPFKHQASWNRRLRTTGGRFFPKDGHLDFNPKILEEHGETVFRQIVRHELCHYHLYFEGLGFRHKDQAFKELLAQVDGLRYAPRLQSHQANYLYICQDCGQAYDRKRPINLAVFACGRCHGRLIKKNQS.

Positions 5–141 constitute a SprT-like domain; the sequence is DYVREVSLAD…CGRCHGRLIK (137 aa). H64 serves as a coordination point for Zn(2+). The active site involves E65. Position 68 (H68) interacts with Zn(2+).

The protein belongs to the SprT family. It depends on Zn(2+) as a cofactor.

It is found in the cytoplasm. In Streptococcus equi subsp. zooepidemicus (strain H70), this protein is Protein SprT-like.